A 137-amino-acid polypeptide reads, in one-letter code: Large ribosomal subunit protein uL22c (137 aa).

It belongs to the universal ribosomal protein uL22 family. In terms of assembly, part of the 50S ribosomal subunit.

It is found in the plastid. Its subcellular location is the chloroplast. Its function is as follows. This protein binds specifically to 23S rRNA. Functionally, the globular domain of the protein is located near the polypeptide exit tunnel on the outside of the subunit, while an extended beta-hairpin is found that lines the wall of the exit tunnel in the center of the 70S ribosome. The chain is Large ribosomal subunit protein uL22c (rpl22) from Oenothera argillicola (Appalachian evening primrose).